The sequence spans 120 residues: Ribonuclease P protein component 2 (120 aa).

Belongs to the eukaryotic/archaeal RNase P protein component 2 family. Consists of a catalytic RNA component and at least 4-5 protein subunits.

It is found in the cytoplasm. The catalysed reaction is Endonucleolytic cleavage of RNA, removing 5'-extranucleotides from tRNA precursor.. Its function is as follows. Part of ribonuclease P, a protein complex that generates mature tRNA molecules by cleaving their 5'-ends. This chain is Ribonuclease P protein component 2, found in Methanobrevibacter smithii (strain ATCC 35061 / DSM 861 / OCM 144 / PS).